The primary structure comprises 46 residues: Iota-conotoxin-like r11b (46 aa).

A 4-hydroxyproline mark is found at Pro-2 and Pro-11. 4 disulfide bridges follow: Cys-5–Cys-19, Cys-12–Cys-22, Cys-18–Cys-27, and Cys-21–Cys-38. Residue Pro-29 is modified to 4-hydroxyproline. At Phe-44 the chain carries D-phenylalanine.

In terms of processing, the natural D-Phe form of the peptide is more potent than the synthetic L-Phe form. In terms of tissue distribution, expressed by the venom duct.

It localises to the secreted. Functionally, iota-conotoxins bind to voltage-gated sodium channels (Nav) and act as agonists by shifting the voltage-dependence of activation to more hyperpolarized levels. Produces excitatory symptoms when injected intracranially into mice and is lethal at higher doses. Exposure to frog cutaneous pectoris induces spontaneous and repetitive action potentials. This effect is slowly reversible. Natural peptide (with D-Phe) is active on nerve, but not on muscle. Synthetic peptide (with L-Phe) is not active on both nerve and muscle. This Conus radiatus (Rayed cone) protein is Iota-conotoxin-like r11b.